Here is a 178-residue protein sequence, read N- to C-terminus: Adenine phosphoribosyltransferase (178 aa).

It belongs to the purine/pyrimidine phosphoribosyltransferase family. As to quaternary structure, homodimer.

Its subcellular location is the cytoplasm. The enzyme catalyses AMP + diphosphate = 5-phospho-alpha-D-ribose 1-diphosphate + adenine. It participates in purine metabolism; AMP biosynthesis via salvage pathway; AMP from adenine: step 1/1. In terms of biological role, catalyzes a salvage reaction resulting in the formation of AMP, that is energically less costly than de novo synthesis. The polypeptide is Adenine phosphoribosyltransferase (Mycoplasmoides gallisepticum (strain R(low / passage 15 / clone 2)) (Mycoplasma gallisepticum)).